We begin with the raw amino-acid sequence, 359 residues long: 3-dehydroquinate synthase (359 aa).

NAD(+) contacts are provided by residues 69–74 (DAEDGK), 103–107 (GAVTD), 127–128 (TT), lysine 140, and lysine 149. Positions 182, 244, and 260 each coordinate Zn(2+).

The protein belongs to the sugar phosphate cyclases superfamily. Dehydroquinate synthase family. It depends on NAD(+) as a cofactor. Requires Co(2+) as cofactor. Zn(2+) serves as cofactor.

Its subcellular location is the cytoplasm. The enzyme catalyses 7-phospho-2-dehydro-3-deoxy-D-arabino-heptonate = 3-dehydroquinate + phosphate. It functions in the pathway metabolic intermediate biosynthesis; chorismate biosynthesis; chorismate from D-erythrose 4-phosphate and phosphoenolpyruvate: step 2/7. Catalyzes the conversion of 3-deoxy-D-arabino-heptulosonate 7-phosphate (DAHP) to dehydroquinate (DHQ). The sequence is that of 3-dehydroquinate synthase from Corynebacterium pseudotuberculosis (strain C231).